A 216-amino-acid polypeptide reads, in one-letter code: Large ribosomal subunit protein uL3 (216 aa).

Q153 is subject to N5-methylglutamine.

It belongs to the universal ribosomal protein uL3 family. In terms of assembly, part of the 50S ribosomal subunit. Forms a cluster with proteins L14 and L19. In terms of processing, methylated by PrmB.

Its function is as follows. One of the primary rRNA binding proteins, it binds directly near the 3'-end of the 23S rRNA, where it nucleates assembly of the 50S subunit. This Burkholderia multivorans (strain ATCC 17616 / 249) protein is Large ribosomal subunit protein uL3.